Here is a 250-residue protein sequence, read N- to C-terminus: Putative HTH-type transcriptional regulatory protein PAE1627 (250 aa).

In terms of domain architecture, HTH cro/C1-type spans 129–183; sequence LRAKRQQAGLSLGTLATNLGVTRETVYRYERGEIEAPLKIAEKLINMFGEDITKK. A DNA-binding region (H-T-H motif) is located at residues 140–159; sequence LGTLATNLGVTRETVYRYER.

This Pyrobaculum aerophilum (strain ATCC 51768 / DSM 7523 / JCM 9630 / CIP 104966 / NBRC 100827 / IM2) protein is Putative HTH-type transcriptional regulatory protein PAE1627.